The sequence spans 385 residues: 8-amino-7-oxononanoate synthase (385 aa).

Residue Arg23 participates in substrate binding. 110–111 (GF) serves as a coordination point for pyridoxal 5'-phosphate. Position 135 (His135) interacts with substrate. The pyridoxal 5'-phosphate site is built by Ser180, His208, and Thr234. Lys237 carries the N6-(pyridoxal phosphate)lysine modification. Substrate is bound at residue Thr350.

The protein belongs to the class-II pyridoxal-phosphate-dependent aminotransferase family. BioF subfamily. As to quaternary structure, homodimer. The cofactor is pyridoxal 5'-phosphate.

The enzyme catalyses 6-carboxyhexanoyl-[ACP] + L-alanine + H(+) = (8S)-8-amino-7-oxononanoate + holo-[ACP] + CO2. It functions in the pathway cofactor biosynthesis; biotin biosynthesis. In terms of biological role, catalyzes the decarboxylative condensation of pimeloyl-[acyl-carrier protein] and L-alanine to produce 8-amino-7-oxononanoate (AON), [acyl-carrier protein], and carbon dioxide. This Vibrio vulnificus (strain YJ016) protein is 8-amino-7-oxononanoate synthase.